The primary structure comprises 653 residues: DNA mismatch repair protein MutL (653 aa).

Residues glutamine 375–serine 425 form a disordered region. The span at tyrosine 380–aspartate 389 shows a compositional bias: basic and acidic residues.

This sequence belongs to the DNA mismatch repair MutL/HexB family.

In terms of biological role, this protein is involved in the repair of mismatches in DNA. It is required for dam-dependent methyl-directed DNA mismatch repair. May act as a 'molecular matchmaker', a protein that promotes the formation of a stable complex between two or more DNA-binding proteins in an ATP-dependent manner without itself being part of a final effector complex. This Vibrio cholerae serotype O1 (strain ATCC 39541 / Classical Ogawa 395 / O395) protein is DNA mismatch repair protein MutL.